We begin with the raw amino-acid sequence, 313 residues long: MPKSNTKYVIDPLSVKTSCSSEESYIRCVEYGKSKAHYSSLILLAKAILAGVFVGVCAHASGIAGGLFYYHKLREYVGASMSAFVYGFTFPIAFLCIICTGSDLFTGNTLAVTTALLHGKVSCLEYVRVMCISLFGNYVGAVSFAFFVSYGSGAFHKKEQVDKNHIFQFLNDIAVKKVNHTFVECICLAIGCNIFVCLAVYFVLSIKDGSGMVFSVFFAVYAFAIAGYEHIIANIYTLNISLMIDTEVSFTQVYFKNLLPTLIGNYIAGALVLACPLFFIYRSYYINYEKMNEPSGGSLRSISIEMKNDGGAT.

Residues 1–47 (MPKSNTKYVIDPLSVKTSCSSEESYIRCVEYGKSKAHYSSLILLAKA) lie on the Cytoplasmic side of the membrane. A helical transmembrane segment spans residues 48-68 (ILAGVFVGVCAHASGIAGGLF). Topologically, residues 69–77 (YYHKLREYV) are extracellular. Residues 78 to 98 (GASMSAFVYGFTFPIAFLCII) form a helical membrane-spanning segment. Over 99-128 (CTGSDLFTGNTLAVTTALLHGKVSCLEYVR) the chain is Cytoplasmic. A helical membrane pass occupies residues 129–149 (VMCISLFGNYVGAVSFAFFVS). Residues 150-185 (YGSGAFHKKEQVDKNHIFQFLNDIAVKKVNHTFVEC) are Extracellular-facing. Asn179 carries an N-linked (GlcNAc...) asparagine glycan. The helical transmembrane segment at 186–206 (ICLAIGCNIFVCLAVYFVLSI) threads the bilayer. The Cytoplasmic portion of the chain corresponds to 207 to 211 (KDGSG). A helical transmembrane segment spans residues 212 to 232 (MVFSVFFAVYAFAIAGYEHII). The Extracellular portion of the chain corresponds to 233–260 (ANIYTLNISLMIDTEVSFTQVYFKNLLP). N-linked (GlcNAc...) asparagine glycosylation is present at Asn239. A helical membrane pass occupies residues 261–281 (TLIGNYIAGALVLACPLFFIY). Over 282-313 (RSYYINYEKMNEPSGGSLRSISIEMKNDGGAT) the chain is Cytoplasmic.

It belongs to the FNT transporter (TC 1.A.16) family. Homopentamer.

Its subcellular location is the cell membrane. The protein resides in the vacuole membrane. The enzyme catalyses (S)-lactate(in) + H(+)(in) = (S)-lactate(out) + H(+)(out). The catalysed reaction is formate(in) + H(+)(in) = formate(out) + H(+)(out). It catalyses the reaction pyruvate(out) + H(+)(out) = pyruvate(in) + H(+)(in). It carries out the reaction acetate(out) + H(+)(out) = acetate(in) + H(+)(in). With respect to regulation, inhibited by the Malaria Box compound MMV007839 and its derivatives BH296 and BH267.meta. In terms of biological role, monocarboxylate-proton symporter that mediates the efflux of the waste product lactate in the intraerythrocytic parasites; active in acidic-to-neutral pH range. Transports L-lactate. The protein is Formate-nitrite transporter of Plasmodium ovale.